The following is a 400-amino-acid chain: Proline-rich protein 5 (400 aa).

The tract at residues 301–358 (TDSTSKLSMAGTKPPGEGERPPISNGQFPPLHNLSDSQQGLYNSQRDSPLLPAPSSSP) is disordered. Positions 334–347 (LSDSQQGLYNSQRD) are enriched in polar residues. Low complexity predominate over residues 348–358 (SPLLPAPSSSP).

This sequence belongs to the PROTOR family. In terms of assembly, associated component of the mechanistic target of rapamycin complex 2 (mTORC2).

Associated subunit of mTORC2, which regulates cell growth and survival in response to hormonal signals. This is Proline-rich protein 5 (prr5) from Xenopus laevis (African clawed frog).